A 430-amino-acid polypeptide reads, in one-letter code: MGQSVVVLGAQWGDEGKGKIVDLLTEEIGAVVRFQGGHNAGHTLVINGKKTVLHLIPSGILRDDALCLIGNGVVISPAALIKEVSELEDAGVEVRSRLKISPAAPLIMPYHIALDQAREKAAGGKAIGTTGRGIGPAYEDKVARRGIRIADLHYPPQLEELLRTALDYHNFVLTKYLGVEAVDFQKTYDEALAFGDYVQPMKSDVAGILHDLRKQGKRVLFEGAQGALLDIDHGTYPYVTSSNTTVGGALAGTGVGADAIDYVLGIAKAYATRVGGGPFPTELDDAVGQGIRDRGAEYGASTGRPRRCGWMDIVALKRAVAINGISGLCITKLDVLDGMEKLKVCIAYEYRGKRTEYAPLDAQGWEECTPVYLEFPGWTENTHGITEWDKLPVAARAYLRALEELAGCPISIVSTGPDRDHTMVLQDPFA.

Residues 13–19 and 41–43 each bind GTP; these read GDEGKGK and GHT. The active-site Proton acceptor is the Asp-14. Residues Asp-14 and Gly-41 each contribute to the Mg(2+) site. Residues 14–17, 39–42, Thr-130, Arg-144, Gln-225, Thr-240, and Arg-304 contribute to the IMP site; these read DEGK and NAGH. His-42 acts as the Proton donor in catalysis. 300–306 is a binding site for substrate; that stretch reads ASTGRPR. GTP contacts are provided by residues Arg-306, 332–334, and 414–416; these read KLD and STG.

This sequence belongs to the adenylosuccinate synthetase family. In terms of assembly, homodimer. The cofactor is Mg(2+).

The protein resides in the cytoplasm. The catalysed reaction is IMP + L-aspartate + GTP = N(6)-(1,2-dicarboxyethyl)-AMP + GDP + phosphate + 2 H(+). It functions in the pathway purine metabolism; AMP biosynthesis via de novo pathway; AMP from IMP: step 1/2. Functionally, plays an important role in the de novo pathway of purine nucleotide biosynthesis. Catalyzes the first committed step in the biosynthesis of AMP from IMP. This chain is Adenylosuccinate synthetase, found in Xanthomonas oryzae pv. oryzae (strain MAFF 311018).